The chain runs to 622 residues: Transcription factor SKN7 (622 aa).

Positions 1–12 (MSFSTINSNVNK) are enriched in polar residues. The disordered stretch occupies residues 1 to 29 (MSFSTINSNVNKTTGDSNNNTTENSSTAD). Positions 13 to 27 (TTGDSNNNTTENSST) are enriched in low complexity. The segment at 84–190 (ANEFVRKLFR…GLDNIKRKIP (107 aa)) is DNA-binding domain. A hydrophobic repeat HR-A/B region spans residues 212 to 303 (TNPNNPSGSL…NNFNTLCSTL (92 aa)). Residues 240-260 (FGNLRRRVDKLQKELDMSKME) are a coiled coil. In terms of domain architecture, Response regulatory spans 378–492 (HVLLVEDDAV…DLHSILIRYL (115 aa)). D427 is modified (4-aspartylphosphate). Disordered stretches follow at residues 501–579 (QQLP…QHHN) and 599–622 (TVPH…NQLS). Residues 512-527 (THSNTNTANSNPNTIN) are compositionally biased toward low complexity. Residues 537–554 (DNPSTTTPVTPGASISSA) are compositionally biased toward polar residues. Residues 555–578 (QHVQQGQQEQQHQIFHAQQQQQHH) show a composition bias toward low complexity. Polar residues predominate over residues 600–622 (VPHSSMGSTPQLPQSTLQENQLS).

The protein belongs to the SKN7 family. Homotrimer. Post-translationally, the phosphorelay mechanism involves the sequential transfer of a phosphate group from 'His-576' (H1) to 'Asp-1144' (D1) of SLN1, then to 'His-64' (H2) of YPD1 and finally to Asp-427 (D2) of SKN7.

It is found in the nucleus. Functionally, transcription factor that is part of a SLN1-YPD1-SKN7 two-component regulatory system, which controls gene expression in response to changes in the osmolarity of the extracellular environment. Under low osmotic conditions, phosphorylated and activated by the phosphorelay intermediate protein YPD1. Also activated in response to oxidative stress, independent on the two-component regulatory system. Regulates heat shock genes in response to oxidative stress and genes involved in cell wall integrity in response to osmotic changes. The protein is Transcription factor SKN7 (SKN7) of Saccharomyces cerevisiae (strain ATCC 204508 / S288c) (Baker's yeast).